Here is a 198-residue protein sequence, read N- to C-terminus: A-type ATP synthase subunit E (198 aa).

This sequence belongs to the V-ATPase E subunit family. In terms of assembly, has multiple subunits with at least A(3), B(3), C, D, E, F, H, I and proteolipid K(x).

It is found in the cell membrane. Its function is as follows. Component of the A-type ATP synthase that produces ATP from ADP in the presence of a proton gradient across the membrane. This is A-type ATP synthase subunit E from Pyrococcus furiosus (strain ATCC 43587 / DSM 3638 / JCM 8422 / Vc1).